Consider the following 376-residue polypeptide: Beta sliding clamp (376 aa).

It belongs to the beta sliding clamp family. In terms of assembly, forms a ring-shaped head-to-tail homodimer around DNA which binds and tethers DNA polymerases and other proteins to the DNA. The DNA replisome complex has a single clamp-loading complex (3 tau and 1 each of delta, delta', psi and chi subunits) which binds 3 Pol III cores (1 core on the leading strand and 2 on the lagging strand) each with a beta sliding clamp dimer. Additional proteins in the replisome are other copies of gamma, psi and chi, Ssb, DNA helicase and RNA primase.

It localises to the cytoplasm. Its function is as follows. Confers DNA tethering and processivity to DNA polymerases and other proteins. Acts as a clamp, forming a ring around DNA (a reaction catalyzed by the clamp-loading complex) which diffuses in an ATP-independent manner freely and bidirectionally along dsDNA. Initially characterized for its ability to contact the catalytic subunit of DNA polymerase III (Pol III), a complex, multichain enzyme responsible for most of the replicative synthesis in bacteria; Pol III exhibits 3'-5' exonuclease proofreading activity. The beta chain is required for initiation of replication as well as for processivity of DNA replication. The polypeptide is Beta sliding clamp (dnaN) (Streptomyces coelicolor (strain ATCC BAA-471 / A3(2) / M145)).